The chain runs to 136 residues: Small ribosomal subunit protein bS16 (136 aa).

It belongs to the bacterial ribosomal protein bS16 family.

In Pseudarthrobacter chlorophenolicus (strain ATCC 700700 / DSM 12829 / CIP 107037 / JCM 12360 / KCTC 9906 / NCIMB 13794 / A6) (Arthrobacter chlorophenolicus), this protein is Small ribosomal subunit protein bS16.